The sequence spans 122 residues: Lycotoxin-Pa4a (122 aa).

Residues 1 to 20 (MKLGIFFSVFFLAMIHSCLS) form the signal peptide. The propeptide occupies 21-47 (ETNEDKNLESYFREDDLKALSFGEYAR). 4 cysteine pairs are disulfide-bonded: C58-C73, C65-C82, C72-C100, and C84-C98.

It belongs to the neurotoxin 19 (CSTX) family. Expressed by the venom gland.

It is found in the secreted. The protein resides in the target cell membrane. In terms of biological role, potent antibacterial peptide with anti-inflammatory properties. Inhibits both Gram-negative and Gram-positive bacteria by disrupting both the outer membrane and the cytosolic membrane of bacteria. Also downregulates the expression of pro-inflammatory mediators (cyclooxygenase-2 (PTGS2/COX2), nitric oxide-induced synthase (NOS2), IL-1 beta (IL1B), TNF-alpha (TNF)) and upregulates the level of anti-inflammatory cytokine (IL10) by inactivating mitogen-activated protein kinase signaling in a lipopolysaccharide-stimulated murine macrophage cell line. The sequence is that of Lycotoxin-Pa4a from Pardosa astrigera (Wolf spider).